We begin with the raw amino-acid sequence, 145 residues long: 3-hydroxyacyl-[acyl-carrier-protein] dehydratase FabZ (145 aa).

H47 is an active-site residue.

This sequence belongs to the thioester dehydratase family. FabZ subfamily.

The protein localises to the cytoplasm. The enzyme catalyses a (3R)-hydroxyacyl-[ACP] = a (2E)-enoyl-[ACP] + H2O. Its function is as follows. Involved in unsaturated fatty acids biosynthesis. Catalyzes the dehydration of short chain beta-hydroxyacyl-ACPs and long chain saturated and unsaturated beta-hydroxyacyl-ACPs. The sequence is that of 3-hydroxyacyl-[acyl-carrier-protein] dehydratase FabZ from Ruthia magnifica subsp. Calyptogena magnifica.